The sequence spans 122 residues: Protein FAM223B (122 aa).

The protein belongs to the FAM223 family.

In Homo sapiens (Human), this protein is Protein FAM223B (FAM223B).